Here is a 400-residue protein sequence, read N- to C-terminus: Glutamyl-tRNA reductase (400 aa).

Residues 45–48 (TCNR), serine 103, 108–110 (EDQ), and glutamine 114 each bind substrate. Cysteine 46 functions as the Nucleophile in the catalytic mechanism. 179-184 (GYGEIG) lines the NADP(+) pocket.

It belongs to the glutamyl-tRNA reductase family. As to quaternary structure, homodimer.

It catalyses the reaction (S)-4-amino-5-oxopentanoate + tRNA(Glu) + NADP(+) = L-glutamyl-tRNA(Glu) + NADPH + H(+). It participates in porphyrin-containing compound metabolism; protoporphyrin-IX biosynthesis; 5-aminolevulinate from L-glutamyl-tRNA(Glu): step 1/2. In terms of biological role, catalyzes the NADPH-dependent reduction of glutamyl-tRNA(Glu) to glutamate 1-semialdehyde (GSA). The sequence is that of Glutamyl-tRNA reductase from Clostridium perfringens (strain ATCC 13124 / DSM 756 / JCM 1290 / NCIMB 6125 / NCTC 8237 / Type A).